Reading from the N-terminus, the 212-residue chain is 2,3-bisphosphoglycerate-dependent phosphoglycerate mutase (212 aa).

Substrate is bound by residues 9-16 (RHGQSEWN), 22-23 (TG), arginine 61, 88-91 (ERDY), lysine 99, 115-116 (RR), and 159-160 (GN). The Tele-phosphohistidine intermediate role is filled by histidine 10. Glutamate 88 acts as the Proton donor/acceptor in catalysis.

Belongs to the phosphoglycerate mutase family. BPG-dependent PGAM subfamily. As to quaternary structure, homodimer.

It catalyses the reaction (2R)-2-phosphoglycerate = (2R)-3-phosphoglycerate. It functions in the pathway carbohydrate degradation; glycolysis; pyruvate from D-glyceraldehyde 3-phosphate: step 3/5. In terms of biological role, catalyzes the interconversion of 2-phosphoglycerate and 3-phosphoglycerate. The protein is 2,3-bisphosphoglycerate-dependent phosphoglycerate mutase of Methylorubrum populi (strain ATCC BAA-705 / NCIMB 13946 / BJ001) (Methylobacterium populi).